Here is a 210-residue protein sequence, read N- to C-terminus: uncharacterized protein (210 aa).

This is an uncharacterized protein from Acanthamoeba polyphaga (Amoeba).